Here is a 43-residue protein sequence, read N- to C-terminus: uncharacterized protein (43 aa).

This is an uncharacterized protein from Bacillus subtilis (strain 168).